Here is a 369-residue protein sequence, read N- to C-terminus: 3-dehydroquinate synthase (369 aa).

NAD(+) is bound by residues 70–75 (DAEDGK), 104–108 (GAATD), 128–129 (TT), lysine 141, lysine 150, and 168–171 (TLET). Zn(2+) contacts are provided by glutamate 183, histidine 246, and histidine 262.

The protein belongs to the sugar phosphate cyclases superfamily. Dehydroquinate synthase family. Co(2+) serves as cofactor. Zn(2+) is required as a cofactor. Requires NAD(+) as cofactor.

Its subcellular location is the cytoplasm. The enzyme catalyses 7-phospho-2-dehydro-3-deoxy-D-arabino-heptonate = 3-dehydroquinate + phosphate. It participates in metabolic intermediate biosynthesis; chorismate biosynthesis; chorismate from D-erythrose 4-phosphate and phosphoenolpyruvate: step 2/7. In terms of biological role, catalyzes the conversion of 3-deoxy-D-arabino-heptulosonate 7-phosphate (DAHP) to dehydroquinate (DHQ). The protein is 3-dehydroquinate synthase of Rhodococcus erythropolis (strain PR4 / NBRC 100887).